The chain runs to 457 residues: UDP-glycosyltransferase 74C1 (457 aa).

Residues T281, 336 to 338 (VPQ), 353 to 361 (HCGWNSTLE), and 375 to 378 (WTDQ) each bind UDP-alpha-D-glucose.

The protein belongs to the UDP-glycosyltransferase family.

In Arabidopsis thaliana (Mouse-ear cress), this protein is UDP-glycosyltransferase 74C1 (UGT74C1).